We begin with the raw amino-acid sequence, 142 residues long: Large ribosomal subunit protein uL11 (142 aa).

Belongs to the universal ribosomal protein uL11 family. As to quaternary structure, part of the ribosomal stalk of the 50S ribosomal subunit. Interacts with L10 and the large rRNA to form the base of the stalk. L10 forms an elongated spine to which L12 dimers bind in a sequential fashion forming a multimeric L10(L12)X complex. One or more lysine residues are methylated.

Forms part of the ribosomal stalk which helps the ribosome interact with GTP-bound translation factors. The polypeptide is Large ribosomal subunit protein uL11 (Rhodopseudomonas palustris (strain BisA53)).